The chain runs to 179 residues: 3-hydroxyanthranilate 3,4-dioxygenase (179 aa).

Position 47 (arginine 47) interacts with O2. Residues histidine 51, glutamate 57, and histidine 96 each contribute to the Fe cation site. Position 57 (glutamate 57) interacts with substrate. Residues arginine 100 and glutamate 110 each contribute to the substrate site. 4 residues coordinate Fe cation: cysteine 125, cysteine 128, cysteine 162, and cysteine 165.

This sequence belongs to the 3-HAO family. The cofactor is Fe(2+).

The catalysed reaction is 3-hydroxyanthranilate + O2 = (2Z,4Z)-2-amino-3-carboxymuconate 6-semialdehyde. The protein operates within cofactor biosynthesis; NAD(+) biosynthesis; quinolinate from L-kynurenine: step 3/3. Catalyzes the oxidative ring opening of 3-hydroxyanthranilate to 2-amino-3-carboxymuconate semialdehyde, which spontaneously cyclizes to quinolinate. In Bacillus thuringiensis (strain Al Hakam), this protein is 3-hydroxyanthranilate 3,4-dioxygenase.